Reading from the N-terminus, the 112-residue chain is Cytoplasmic envelopment protein 3 (112 aa).

The N-myristoyl glycine; by host moiety is linked to residue Gly2. The interval 84 to 112 (GANKGGGKRTSSLKSAKNGAGVKKKVRAL) is disordered.

Belongs to the herpesviridae cytoplasmic envelopment protein 3 family. In terms of assembly, interacts with cytoplasmic envelopment protein 2; this interaction is essential for the proper localization of each protein to the assembly complex and thus for the production of infectious virus. In terms of processing, myristoylation and palmitoylation (probably on one or more of the nearby cysteines at the N-terminus) enable membrane-binding and Golgi apparatus-specific targeting and are essential for efficient packaging. Phosphorylated. Phosphorylation does not seem to be required for recycling to the host Golgi apparatus. Packaging is selective for underphosphorylated forms.

The protein resides in the virion tegument. The protein localises to the virion membrane. It localises to the host cell membrane. Its subcellular location is the host Golgi apparatus membrane. Plays an important role in the cytoplasmic envelopment of tegument proteins and capsids during the assembly and egress processes. Also participates in viral entry at the fusion step probably by regulating the core fusion machinery. The protein is Cytoplasmic envelopment protein 3 (UL99) of Murid herpesvirus 1 (strain K181) (MuHV-1).